We begin with the raw amino-acid sequence, 175 residues long: NAD(P)H-quinone oxidoreductase subunit I, chloroplastic (175 aa).

4Fe-4S ferredoxin-type domains follow at residues 55 to 84 and 95 to 124; these read GRIH…VNWE and QTYS…MTEE. 8 residues coordinate [4Fe-4S] cluster: Cys-64, Cys-67, Cys-70, Cys-74, Cys-104, Cys-107, Cys-110, and Cys-114.

Belongs to the complex I 23 kDa subunit family. As to quaternary structure, NDH is composed of at least 16 different subunits, 5 of which are encoded in the nucleus. It depends on [4Fe-4S] cluster as a cofactor.

It is found in the plastid. The protein resides in the chloroplast thylakoid membrane. It carries out the reaction a plastoquinone + NADH + (n+1) H(+)(in) = a plastoquinol + NAD(+) + n H(+)(out). The catalysed reaction is a plastoquinone + NADPH + (n+1) H(+)(in) = a plastoquinol + NADP(+) + n H(+)(out). NDH shuttles electrons from NAD(P)H:plastoquinone, via FMN and iron-sulfur (Fe-S) centers, to quinones in the photosynthetic chain and possibly in a chloroplast respiratory chain. The immediate electron acceptor for the enzyme in this species is believed to be plastoquinone. Couples the redox reaction to proton translocation, and thus conserves the redox energy in a proton gradient. This Chlorokybus atmophyticus (Soil alga) protein is NAD(P)H-quinone oxidoreductase subunit I, chloroplastic.